The chain runs to 374 residues: Anhydro-N-acetylmuramic acid kinase (374 aa).

ATP is bound at residue 9-16 (GTSLDGID).

The protein belongs to the anhydro-N-acetylmuramic acid kinase family.

The catalysed reaction is 1,6-anhydro-N-acetyl-beta-muramate + ATP + H2O = N-acetyl-D-muramate 6-phosphate + ADP + H(+). Its pathway is amino-sugar metabolism; 1,6-anhydro-N-acetylmuramate degradation. The protein operates within cell wall biogenesis; peptidoglycan recycling. In terms of biological role, catalyzes the specific phosphorylation of 1,6-anhydro-N-acetylmuramic acid (anhMurNAc) with the simultaneous cleavage of the 1,6-anhydro ring, generating MurNAc-6-P. Is required for the utilization of anhMurNAc either imported from the medium or derived from its own cell wall murein, and thus plays a role in cell wall recycling. The chain is Anhydro-N-acetylmuramic acid kinase from Methylobacterium nodulans (strain LMG 21967 / CNCM I-2342 / ORS 2060).